Consider the following 467-residue polypeptide: Acetaldehyde dehydrogenase (acetylating) EutE (467 aa).

It belongs to the EutE/PduP family. In terms of assembly, interacts with EutS, which targets it to the interior of the BMC. The cofactor is Has a very strong preference for NAD(+) over NADP(+)..

The protein localises to the bacterial microcompartment. It carries out the reaction acetaldehyde + NAD(+) + CoA = acetyl-CoA + NADH + H(+). The protein operates within amine and polyamine degradation; ethanolamine degradation. Acts as the second step in ethanolamine degradation by converting acetaldehyde into acetyl-CoA. May play a role in bacterial microcompartment (BMC) assembly or maintenance. Directly targeted to the BMC. Its heterologous expression in S.cerevisiae increases the level of acetylating acetaldehyde dehydrogenase activity. In Escherichia coli (strain K12), this protein is Acetaldehyde dehydrogenase (acetylating) EutE (eutE).